We begin with the raw amino-acid sequence, 550 residues long: Methionine--tRNA ligase (550 aa).

A 'HIGH' region motif is present at residues 10–22 (LPYPNNSSPHLGN). Positions 336–340 (KFSKS) match the 'KMSKS' region motif. Residue K339 participates in ATP binding.

This sequence belongs to the class-I aminoacyl-tRNA synthetase family.

The enzyme catalyses tRNA(Met) + L-methionine + ATP = L-methionyl-tRNA(Met) + AMP + diphosphate. This is Methionine--tRNA ligase (MARS) from Acanthamoeba polyphaga mimivirus (APMV).